The primary structure comprises 444 residues: Chromosome partition protein MukF (444 aa).

The tract at residues 212-240 (LDETSGNLRELQDTLNAAGDKLQAQLLRI) is leucine-zipper.

The protein belongs to the MukF family. As to quaternary structure, interacts, and probably forms a ternary complex, with MukE and MukB via its C-terminal region. The complex formation is stimulated by calcium or magnesium. It is required for an interaction between MukE and MukB.

It localises to the cytoplasm. The protein resides in the nucleoid. Its function is as follows. Involved in chromosome condensation, segregation and cell cycle progression. May participate in facilitating chromosome segregation by condensation DNA from both sides of a centrally located replisome during cell division. Not required for mini-F plasmid partitioning. Probably acts via its interaction with MukB and MukE. Overexpression results in anucleate cells. It has a calcium binding activity. The sequence is that of Chromosome partition protein MukF from Haemophilus influenzae (strain PittGG).